The primary structure comprises 610 residues: Elongation factor 4 (610 aa).

Residues 11 to 193 (ENIRNFSIIA…QIVEKVPAPS (183 aa)) form the tr-type G domain. GTP is bound by residues 23-28 (DHGKST) and 140-143 (NKID).

This sequence belongs to the TRAFAC class translation factor GTPase superfamily. Classic translation factor GTPase family. LepA subfamily.

The protein localises to the cell membrane. The catalysed reaction is GTP + H2O = GDP + phosphate + H(+). Functionally, required for accurate and efficient protein synthesis under certain stress conditions. May act as a fidelity factor of the translation reaction, by catalyzing a one-codon backward translocation of tRNAs on improperly translocated ribosomes. Back-translocation proceeds from a post-translocation (POST) complex to a pre-translocation (PRE) complex, thus giving elongation factor G a second chance to translocate the tRNAs correctly. Binds to ribosomes in a GTP-dependent manner. The sequence is that of Elongation factor 4 from Streptococcus equi subsp. zooepidemicus (strain H70).